We begin with the raw amino-acid sequence, 328 residues long: Lipoyl synthase (328 aa).

The [4Fe-4S] cluster site is built by Cys75, Cys80, Cys86, Cys101, Cys105, Cys108, and Ser315. Positions 87–304 constitute a Radical SAM core domain; that stretch reads FNHGTATFMI…EREAKKMGYE (218 aa).

This sequence belongs to the radical SAM superfamily. Lipoyl synthase family. The cofactor is [4Fe-4S] cluster.

The protein resides in the cytoplasm. It carries out the reaction [[Fe-S] cluster scaffold protein carrying a second [4Fe-4S](2+) cluster] + N(6)-octanoyl-L-lysyl-[protein] + 2 oxidized [2Fe-2S]-[ferredoxin] + 2 S-adenosyl-L-methionine + 4 H(+) = [[Fe-S] cluster scaffold protein] + N(6)-[(R)-dihydrolipoyl]-L-lysyl-[protein] + 4 Fe(3+) + 2 hydrogen sulfide + 2 5'-deoxyadenosine + 2 L-methionine + 2 reduced [2Fe-2S]-[ferredoxin]. The protein operates within protein modification; protein lipoylation via endogenous pathway; protein N(6)-(lipoyl)lysine from octanoyl-[acyl-carrier-protein]: step 2/2. Functionally, catalyzes the radical-mediated insertion of two sulfur atoms into the C-6 and C-8 positions of the octanoyl moiety bound to the lipoyl domains of lipoate-dependent enzymes, thereby converting the octanoylated domains into lipoylated derivatives. The polypeptide is Lipoyl synthase (Colwellia psychrerythraea (strain 34H / ATCC BAA-681) (Vibrio psychroerythus)).